We begin with the raw amino-acid sequence, 360 residues long: MGISRSDLEETMSKPPDCLPRMLRGTPRQRVFTLFIISFKFTFLVSILIYWHTVGAPKDQRRQYSLPVDFPCPQLAFPRVSAPGNIFFLETSDRTNPSFLFMCSVESAARAHPESQVVVLMKGLPRDTTAWPRNLGISLLSCFPNVQIRPLDLQELFEDTPLAAWYLEAQHRWEPYLLPVLSDASRIALLWKFGGIYLDTDFIVLKNLRNLTNMLGIQSRYVLNGAFLAFERKHEFLALCIRDFVAHYNGWIWGHQGPQLLTRVFKKWCSIHSLKESRACRGVTALPPEAFYPIPWQNWKKYFEDVSPEELAQLLNATYAVHVWNKKSQGTHLEATSRALLAQLHARYCPTTHRAMTMYL.

The Cytoplasmic portion of the chain corresponds to 1–30 (MGISRSDLEETMSKPPDCLPRMLRGTPRQR). Residues 31-51 (VFTLFIISFKFTFLVSILIYW) traverse the membrane as a helical; Signal-anchor for type II membrane protein segment. The Lumenal segment spans residues 52–360 (HTVGAPKDQR…TTHRAMTMYL (309 aa)). Positions 199–201 (DTD) match the DXD motif motif. N-linked (GlcNAc...) asparagine glycans are attached at residues N210 and N316.

This sequence belongs to the glycosyltransferase 32 family. As to expression, ubiquitous. Highly expressed in kidney, mesenteric lymph node, spleen and brain.

Its subcellular location is the golgi apparatus membrane. It catalyses the reaction a beta-D-Gal-(1-&gt;4)-beta-D-Glc-(1&lt;-&gt;1)-Cer(d18:1(4E)) + UDP-alpha-D-galactose = a globoside Gb3Cer (d18:1(4E)) + UDP + H(+). It carries out the reaction a beta-D-Gal-(1&lt;-&gt;1')-ceramide + UDP-alpha-D-galactose = alpha-D-Gal-(1-&gt;4)-beta-D-Gal-(1&lt;-&gt;1')-Cer + UDP + H(+). The protein operates within glycolipid biosynthesis. Functionally, catalyzes the transfer of galactose from UDP-alpha-D-galactose to lactosylceramide/beta-D-galactosyl-(1-&gt;4)-beta-D-glucosyl-(1&lt;-&gt;1)-ceramide(d18:1(4E)) to produce globotriaosylceramide/globoside Gb3Cer (d18:1(4E)). Also able to transfer galactose to galactosylceramide/beta-D-Gal-(1&lt;-&gt;1')-Cer. Globoside Gb3Cer is a glycosphingolipid of the globo serie, one of the major types of neutral root structures of glycosphingolipids, that constitute a significant portion of mammalian cell membranes. The polypeptide is Lactosylceramide 4-alpha-galactosyltransferase (Rattus norvegicus (Rat)).